The primary structure comprises 369 residues: Nudix hydrolase 8 (369 aa).

One can recognise a Nudix hydrolase domain in the interval 188–318 (SHQVGVGGFV…GDKMFKRVIE (131 aa)). Residues 225-246 (GFINESEEIFSGAVREVKEETG) carry the Nudix box motif. E240 and E244 together coordinate Mg(2+).

The protein belongs to the Nudix hydrolase family. It depends on Mg(2+) as a cofactor. Requires Mn(2+) as cofactor. In terms of tissue distribution, expressed in roots, stems and, at lower level, leaves.

In terms of biological role, probably mediates the hydrolysis of some nucleoside diphosphate derivatives. May be involved in plant immunity and act as a positive regulator of defense response through salicylic acid (SA) signaling. The chain is Nudix hydrolase 8 (NUDT8) from Arabidopsis thaliana (Mouse-ear cress).